The following is a 67-amino-acid chain: Nigrocin-2GRc (67 aa).

Positions 1–22 are cleaved as a signal peptide; sequence MFTMKKSMLLLFFLGTISLSLC. Positions 23-46 are excised as a propeptide; the sequence is EQERNADEEERRDEEVAKMEEIKR. Cys-61 and Cys-67 are oxidised to a cystine.

As to expression, expressed by the skin glands.

It is found in the secreted. Antimicrobial peptide active at least against the Gram-positive bacterium S.aureus but with otherwise unclear activity spectrum. Lacks hemolytic activity against rabbit or human erythrocytes. The polypeptide is Nigrocin-2GRc (Odorrana grahami (Yunnanfu frog)).